The following is a 166-amino-acid chain: uncharacterized protein (166 aa).

This is an uncharacterized protein from Enterobacteria phage T4 (Bacteriophage T4).